Consider the following 450-residue polypeptide: MGKYFGTDGVRGEANLELTPELAFKLGRFGGYVLSQHETEAPKVFVGRDTRISGEMLESALVAGLLSVGIHVYKLGVLATPAVAYLVETEGASAGVMIXASHNPALDNGIKFFGGDGFKLDDEKEAEIEALLDAEEDTLPXPSAEGLGILVDYPEGLRKYEGYLVSTGTPLDGMKVALDTANGAASTSARQIFADLGAQLTVIGETPDGLNINLNVGSTHPEALQEVVKESGSAIGLAFDGDSDRLIAVDENGDIVDGDKIMYIIGKYLSEKGQLAQNTIVTTVMSNLGFHKALNREGINKAVTAVGDRYVVEEMRKSGYNLGGEQSGHVILMDYNTTGDGQLSAVQLTKIMKETGKSLSELAAEVTIYPQKLVNIRVENVMKEKAMEVPAIKAIIEKMEEEMAGNGRILVRPSGTEPLLRVMAEAPTTEEVDYYVDTITDVVRAEIGID.

Ser101 (phosphoserine intermediate) is an active-site residue. The Mg(2+) site is built by Ser101, Asp240, Asp242, and Asp244. A Phosphoserine modification is found at Ser101.

The protein belongs to the phosphohexose mutase family. The cofactor is Mg(2+). In terms of processing, activated by phosphorylation.

The enzyme catalyses alpha-D-glucosamine 1-phosphate = D-glucosamine 6-phosphate. Functionally, catalyzes the conversion of glucosamine-6-phosphate to glucosamine-1-phosphate. The protein is Phosphoglucosamine mutase of Streptococcus pneumoniae serotype 19F (strain G54).